The chain runs to 72 residues: UPF0154 protein LBA1278 (72 aa).

A helical membrane pass occupies residues 3–23; that stretch reads LGLAIFLIIIALLVGATAGFY.

It belongs to the UPF0154 family.

The protein localises to the cell membrane. The sequence is that of UPF0154 protein LBA1278 from Lactobacillus acidophilus (strain ATCC 700396 / NCK56 / N2 / NCFM).